The sequence spans 529 residues: GTPase Obg (529 aa).

The region spanning 2 to 159 is the Obg domain; it reads PTFVDRVVLH…LDAVLELKTV (158 aa). The tract at residues 62 to 86 is disordered; the sequence is FHPHQRASRGRPGQGSNRHGADGAD. One can recognise an OBG-type G domain in the interval 160 to 332; that stretch reads ADVALVGFPS…LSLALADLVA (173 aa). GTP contacts are provided by residues 166-173, 191-195, 213-216, 284-287, and 313-315; these read GFPSAGKS, FTTLV, DVPG, NKID, and STA. Mg(2+) contacts are provided by serine 173 and threonine 193. Residues 350–427 enclose the OCT domain; that stretch reads PRAVNEPDFT…IGEVTFDWEP (78 aa). Disordered regions lie at residues 434–494 and 506–529; these read LGNG…DRLR and ARRA…EEEG. Low complexity-rich tracts occupy residues 461–472 and 508–520; these read AGTAASGAAPSP and RAAA…VRGE.

This sequence belongs to the TRAFAC class OBG-HflX-like GTPase superfamily. OBG GTPase family. In terms of assembly, monomer. It depends on Mg(2+) as a cofactor.

The protein resides in the cytoplasm. In terms of biological role, an essential GTPase which binds GTP, GDP and possibly (p)ppGpp with moderate affinity, with high nucleotide exchange rates and a fairly low GTP hydrolysis rate. Plays a role in control of the cell cycle, stress response, ribosome biogenesis and in those bacteria that undergo differentiation, in morphogenesis control. The protein is GTPase Obg of Frankia casuarinae (strain DSM 45818 / CECT 9043 / HFP020203 / CcI3).